Here is a 2113-residue protein sequence, read N- to C-terminus: Ninein (2113 aa).

EF-hand domains are found at residues 8 to 43 (QHEARLKELFDSFDTLGTGSLGQEELTDLCHVLCLE) and 42 to 77 (LEDVGPVLQQTLLQDNLLGRVHFDQFKEALILILSR). At Ser-152 the chain carries Phosphoserine. 2 EF-hand domains span residues 182-217 (WIEEKLQEVCEDLGITRDGHLNRKKLVSICEQYGLQ) and 219-252 (VDGAMLEEVFLSLDPDGTMSVEDFFYGLFKTGKS). Residue 245 to 252 (GLFKTGKS) coordinates GTP. Ser-269 is modified (phosphoserine). GTP is bound at residue 300–304 (DGMGQ). An EF-hand 5 domain is found at 317-352 (EGIENSQEILKALDFSLDGNINLTELTLALENELLV). Positions 358–570 (HQAALASFKA…YQAQGRVLRL (213 aa)) form a coiled coil. Residue 420–423 (RKLD) participates in GTP binding. The interval 578–599 (EELDGHSGGIEPDQGPGSEECN) is disordered. Coiled coils occupy residues 620–926 (RDLC…ESQH), 958–1008 (EQLA…STEI), 1175–1323 (EDTR…MEKV), and 1425–1806 (AALL…IDKD). The tract at residues 798 to 1495 (EMETECNRRV…QDLQITCGEM (698 aa)) is important for interaction with CEP170. Phosphoserine is present on residues Ser-1540 and Ser-1826. 2 coiled-coil regions span residues 1852–1910 (VQNT…KEQS) and 1971–2093 (REQF…IASL). Disordered stretches follow at residues 1899–1922 (KRECEQSQKEQSPTSRKVGQMGSL) and 1988–2008 (SQHLQEELENRTSETNTPQGN). The segment covering 1988–1999 (SQHLQEELENRT) has biased composition (basic and acidic residues).

In terms of assembly, homooligomer. Interacts with GSK3B/GSK3-beta via its C-terminal domain. Interacts with C14ORF166, such interaction may prevent its phosphorylation by GSK3B. Interacts with AUNIP (via N-terminus). Identified in a complex with AUNIP and AURKA. Interacts with CCDC120. Interacts (via C-terminus) with CEP250. Interacts with CEP170. Interacts (via N-terminus) with the gamma-tubulin ring complex component TUBGCP3. Interacts with gamma-tubulin. Isoform 4 does not interact with CEP170 or CEP250. Post-translationally, phosphorylated by AURKA/Aurora kinase A and PKA kinases but not CK2 or AURKB/Aurora kinase B. In terms of tissue distribution, widely expressed. Highly expressed in spleen, bone marrow and skin. Weakly expressed in liver and small intestine. Expressed in brain.

Its subcellular location is the cytoplasm. The protein localises to the cytoskeleton. It is found in the microtubule organizing center. The protein resides in the centrosome. It localises to the centriole. Its function is as follows. Centrosomal protein required for the positioning and anchorage of the microtubule minus-end in epithelial cells. May also act as a centrosome maturation factor. May play a role in microtubule nucleation, by recruiting the gamma-tubulin ring complex to the centrosome. Overexpression does not perturb nucleation or elongation of microtubules but suppresses release of microtubules. Required for centriole organization and microtubule anchoring at the mother centriole. The chain is Ninein from Mus musculus (Mouse).